The following is an 874-amino-acid chain: Alanine--tRNA ligase (874 aa).

Zn(2+) contacts are provided by H564, H568, C665, and H669.

Belongs to the class-II aminoacyl-tRNA synthetase family. It depends on Zn(2+) as a cofactor.

Its subcellular location is the cytoplasm. The enzyme catalyses tRNA(Ala) + L-alanine + ATP = L-alanyl-tRNA(Ala) + AMP + diphosphate. Functionally, catalyzes the attachment of alanine to tRNA(Ala) in a two-step reaction: alanine is first activated by ATP to form Ala-AMP and then transferred to the acceptor end of tRNA(Ala). Also edits incorrectly charged Ser-tRNA(Ala) and Gly-tRNA(Ala) via its editing domain. The sequence is that of Alanine--tRNA ligase from Cupriavidus metallidurans (strain ATCC 43123 / DSM 2839 / NBRC 102507 / CH34) (Ralstonia metallidurans).